A 948-amino-acid polypeptide reads, in one-letter code: Protocadherin alpha-2 (948 aa).

The signal sequence occupies residues 1-22; that stretch reads MASSIRRGRGAWTRLLSLLLLA. The Extracellular portion of the chain corresponds to 23 to 697; that stretch reads AWEVGSGQLR…GSEATLVDVN (675 aa). Cadherin domains follow at residues 30–133, 157–242, 243–350, 351–455, 456–565, and 588–678; these read QLRY…PPIF, ASDA…EPTF, AQSV…TPEV, SITS…APAF, AQPE…APAL, and GHVV…APKA. 4 N-linked (GlcNAc...) asparagine glycosylation sites follow: N257, N265, N362, and N548. Residues 698–718 form a helical membrane-spanning segment; sequence VYLIIAICAVSSLLVLTVLLY. The Cytoplasmic portion of the chain corresponds to 719–948; the sequence is TALRCSVPPT…GNSTTDNSDQ (230 aa). The PXXP 1 repeat unit spans residues 734 to 737; it reads PGKP. The interval 734–892 is 5 X 4 AA repeats of P-X-X-P; the sequence is PGKPTLVCSS…PDKFIIPGSP (159 aa). 3 disordered regions span residues 754–801, 829–854, and 868–948; these read RRQR…RQPN, GPGG…EVSP, and KYGP…NSDQ. Over residues 783–795 the composition is skewed to basic and acidic residues; sequence AEEKQLSESEYVG. 4 PXXP repeats span residues 797 to 800, 830 to 833, 871 to 874, and 889 to 892; these read PRQP, PGGP, PGNP, and PGSP. Basic and acidic residues predominate over residues 907–921; that stretch reads DKSDFITFGKKEETK.

The protein resides in the cell membrane. Its function is as follows. Potential calcium-dependent cell-adhesion protein. May be involved in the establishment and maintenance of specific neuronal connections in the brain. In Homo sapiens (Human), this protein is Protocadherin alpha-2 (PCDHA2).